The following is a 152-amino-acid chain: Transcriptional regulator MraZ (152 aa).

2 SpoVT-AbrB domains span residues Ala5–Glu52 and Ala81–Thr124.

The protein belongs to the MraZ family. In terms of assembly, forms oligomers.

It is found in the cytoplasm. The protein resides in the nucleoid. Functionally, negatively regulates its own expression and that of the subsequent genes in the proximal part of the division and cell wall (dcw) gene cluster. Acts by binding directly to DNA. May also regulate the expression of genes outside the dcw cluster. This chain is Transcriptional regulator MraZ, found in Shigella dysenteriae serotype 1 (strain Sd197).